Here is a 493-residue protein sequence, read N- to C-terminus: Aspartate-semialdehyde dehydrogenase (Non-phosphorylating) (493 aa).

NADP(+)-binding positions include 160–161, 184–187, and 237–238; these read WN, KPAH, and GS. Glutamate 259 functions as the Proton acceptor in the catalytic mechanism. Leucine 260 lines the NADP(+) pocket. Catalysis depends on cysteine 293, which acts as the Nucleophile. Glutamate 390 is a binding site for NADP(+).

It belongs to the aldehyde dehydrogenase family.

It is found in the cytoplasm. The catalysed reaction is L-aspartate 4-semialdehyde + NAD(+) + H2O = L-aspartate + NADH + 2 H(+). In terms of biological role, involved in the degradation of ectoine, which allows H.elongata to utilize ectoine as both a carbon and a nitrogen source for growth. Probably catalyzes the NAD(+)-dependent oxidation of L-aspartate-semialdehyde to L-aspartate. The protein is Aspartate-semialdehyde dehydrogenase (Non-phosphorylating) of Halomonas elongata (strain ATCC 33173 / DSM 2581 / NBRC 15536 / NCIMB 2198 / 1H9).